Reading from the N-terminus, the 515-residue chain is Transcription termination factor Rho (515 aa).

Residues 146-221 enclose the Rho RNA-BD domain; it reads DVLFTGVLDV…VKIKSINDQD (76 aa). Residues 264–269, 276–281, and Arg-307 each bind ATP; these read GKGQRA and KAGKTT.

Belongs to the Rho family. In terms of assembly, homohexamer. The homohexamer assembles into an open ring structure.

Its function is as follows. Facilitates transcription termination by a mechanism that involves Rho binding to the nascent RNA, activation of Rho's RNA-dependent ATPase activity, and release of the mRNA from the DNA template. This Borreliella burgdorferi (strain ATCC 35210 / DSM 4680 / CIP 102532 / B31) (Borrelia burgdorferi) protein is Transcription termination factor Rho.